Consider the following 179-residue polypeptide: MYLTIKSIMLLWKYLLVTESQVSKCGFHIVKKKGDVLYPKRTKYSKYRKGRCSRGCKPDGTKLGFGRYGIKSCKAGRLSYRAIEAARRAIIGHFHRAMSGQFRRNGKIWVRVFADLPITGKPTEVRMGRGKGNPTGWIARVSTGQILFEMDGVSLANARQAATLAAHKLCLSTKFVQWS.

Belongs to the universal ribosomal protein uL16 family. Component of the mitochondrial ribosome large subunit.

It localises to the mitochondrion. In Arabidopsis thaliana (Mouse-ear cress), this protein is Large ribosomal subunit protein uL16m (RPL16).